We begin with the raw amino-acid sequence, 246 residues long: Pyridoxine 5'-phosphate synthase (246 aa).

A 3-amino-2-oxopropyl phosphate-binding site is contributed by N12. 14–15 (DH) lines the 1-deoxy-D-xylulose 5-phosphate pocket. R23 contributes to the 3-amino-2-oxopropyl phosphate binding site. H48 functions as the Proton acceptor in the catalytic mechanism. R50 and H55 together coordinate 1-deoxy-D-xylulose 5-phosphate. E75 (proton acceptor) is an active-site residue. T105 is a 1-deoxy-D-xylulose 5-phosphate binding site. H196 serves as the catalytic Proton donor. Residues G197 and 218 to 219 (GH) each bind 3-amino-2-oxopropyl phosphate.

It belongs to the PNP synthase family. In terms of assembly, homooctamer; tetramer of dimers.

It localises to the cytoplasm. The catalysed reaction is 3-amino-2-oxopropyl phosphate + 1-deoxy-D-xylulose 5-phosphate = pyridoxine 5'-phosphate + phosphate + 2 H2O + H(+). It participates in cofactor biosynthesis; pyridoxine 5'-phosphate biosynthesis; pyridoxine 5'-phosphate from D-erythrose 4-phosphate: step 5/5. Catalyzes the complicated ring closure reaction between the two acyclic compounds 1-deoxy-D-xylulose-5-phosphate (DXP) and 3-amino-2-oxopropyl phosphate (1-amino-acetone-3-phosphate or AAP) to form pyridoxine 5'-phosphate (PNP) and inorganic phosphate. This chain is Pyridoxine 5'-phosphate synthase, found in Pseudomonas syringae pv. tomato (strain ATCC BAA-871 / DC3000).